The following is a 304-amino-acid chain: Non-specific ribonucleoside hydrolase RihC (304 aa).

The active site involves His-233.

This sequence belongs to the IUNH family. RihC subfamily.

Functionally, hydrolyzes both purine and pyrimidine ribonucleosides with a broad-substrate specificity. This is Non-specific ribonucleoside hydrolase RihC from Shigella boydii serotype 4 (strain Sb227).